Reading from the N-terminus, the 839-residue chain is AMP deaminase (839 aa).

A helical transmembrane segment spans residues 8–28 (LALAALFGASFVAVSGFFMHF). The disordered stretch occupies residues 40-167 (ERKENPDGDE…DDDDNLTNSE (128 aa)). Over residues 85 to 94 (DGGGGGGGDT) the composition is skewed to gly residues. Phosphoserine occurs at positions 134 and 140. A compositionally biased stretch (acidic residues) spans 153–162 (SVEESDDDDN). Position 203 is a phosphoserine (serine 203). 289 to 296 (AHYPQGKS) serves as a coordination point for ATP. Residues histidine 391 and histidine 393 each contribute to the Zn(2+) site. Substrate contacts are provided by residues histidine 393 and 462–467 (KFNLKY). Position 659 (histidine 659) interacts with Zn(2+). Residue glutamate 662 participates in substrate binding. Histidine 681 serves as the catalytic Proton acceptor. Aspartate 736 is a Zn(2+) binding site. 737-740 (DPLQ) is a binding site for substrate.

It belongs to the metallo-dependent hydrolases superfamily. Adenosine and AMP deaminases family. As to quaternary structure, homodimer. Interacts with AHK4. Interacts with EER5. The cofactor is Zn(2+). In terms of tissue distribution, expressed in seedlings, roots, leaves, flowers, pollen grains, pollen tubes and siliques, and at a lower level in stems.

It is found in the membrane. Its subcellular location is the microsome membrane. It catalyses the reaction AMP + H2O + H(+) = IMP + NH4(+). It participates in purine metabolism; IMP biosynthesis via salvage pathway; IMP from AMP: step 1/1. Activated by ATP. Activated by sulfate ions (in vitro). Inhibited by phosphate ions. Its function is as follows. AMP deaminase plays a critical role in energy metabolism. Essential for the transition from zygote to embryo. The protein is AMP deaminase of Arabidopsis thaliana (Mouse-ear cress).